The following is a 1228-amino-acid chain: AT-rich interactive domain-containing protein 4B (1228 aa).

2 disordered regions span residues Leu-123 to Lys-167 and Lys-266 to Glu-307. Ser-276, Ser-295, and Ser-296 each carry phosphoserine. Over residues Glu-277 to Phe-305 the composition is skewed to acidic residues. Residues Pro-306–Arg-398 form the ARID domain. Residues Lys-428 and Lys-461 each participate in a glycyl lysine isopeptide (Lys-Gly) (interchain with G-Cter in SUMO2) cross-link. Residues Glu-437 to Ile-464 show a composition bias toward basic and acidic residues. Disordered regions lie at residues Glu-437–Pro-466, Pro-479–Arg-525, Arg-539–Gly-606, Leu-620–Arg-802, Leu-825–Lys-1129, and Ser-1168–Ala-1204. Ser-482 is modified (phosphoserine). The segment covering Asp-483–Glu-511 has biased composition (basic and acidic residues). Residues Pro-546 to Lys-555 show a composition bias toward basic residues. A compositionally biased stretch (basic and acidic residues) spans Asn-556–Ser-569. Residues Ser-579, Ser-581, and Ser-588 each carry the phosphoserine modification. Over residues Asp-596–Gly-606 the composition is skewed to basic and acidic residues. Ser-630 is subject to Phosphoserine. Composition is skewed to basic and acidic residues over residues Glu-635 to Leu-667 and Ser-691 to Glu-700. A Glycyl lysine isopeptide (Lys-Gly) (interchain with G-Cter in SUMO2) cross-link involves residue Lys-664. Phosphoserine occurs at positions 691 and 703. The span at Ala-701–Glu-713 shows a compositional bias: acidic residues. Thr-706 bears the Phosphothreonine mark. A compositionally biased stretch (basic and acidic residues) spans Val-721 to Leu-730. A compositionally biased stretch (polar residues) spans Ile-744–Ser-753. Basic and acidic residues-rich tracts occupy residues Gly-755 to Glu-765, Leu-825 to Val-843, and Lys-911 to Glu-926. The span at Phe-927 to Asn-937 shows a compositional bias: polar residues. Ser-930 bears the Phosphoserine mark. Thr-942 is subject to Phosphothreonine. A compositionally biased stretch (low complexity) spans Glu-944–Val-965. The residue at position 945 (Ser-945) is a Phosphoserine. Basic and acidic residues predominate over residues Glu-972–Thr-981. Residues Ser-1003–Ser-1017 show a composition bias toward low complexity. A compositionally biased stretch (basic residues) spans Lys-1046–Lys-1064. Thr-1066 is modified (phosphothreonine). 4 positions are modified to phosphoserine: Ser-1068, Ser-1069, Ser-1071, and Ser-1075. Residues Lys-1112 to Ser-1124 show a composition bias toward basic and acidic residues. Positions Glu-1141–Glu-1186 form a coiled coil. The segment covering Ala-1188–Ala-1204 has biased composition (low complexity).

Component of a Sin3A corepressor complex consisting of SIN3A, SAP130, SUDS3/SAP45, SAP180, HDAC1 and HDAC2. Interacts with ARID4A. Interacts with AR.

The protein localises to the nucleus. In terms of biological role, acts as a transcriptional repressor. May function in the assembly and/or enzymatic activity of the Sin3A corepressor complex or in mediating interactions between the complex and other regulatory complexes. Plays a role in the regulation of epigenetic modifications at the PWS/AS imprinting center near the SNRPN promoter, where it might function as part of a complex with RB1 and ARID4A. Involved in spermatogenesis, together with ARID4A, where it functions as a transcriptional coactivator for AR (androgen receptor) and enhances expression of genes required for sperm maturation. Regulates expression of the tight junction protein CLDN3 in the testis, which is important for integrity of the blood-testis barrier. Plays a role in myeloid homeostasis where it regulates the histone methylation state of bone marrow cells and expression of various genes involved in hematopoiesis. May function as a leukemia suppressor. The sequence is that of AT-rich interactive domain-containing protein 4B (Arid4b) from Rattus norvegicus (Rat).